The primary structure comprises 171 residues: Small ribosomal subunit protein uS5 (171 aa).

The S5 DRBM domain occupies 14-77 (LKEKLVMVNR…EKAKKKLLKI (64 aa)).

It belongs to the universal ribosomal protein uS5 family. Part of the 30S ribosomal subunit. Contacts proteins S4 and S8.

In terms of biological role, with S4 and S12 plays an important role in translational accuracy. Located at the back of the 30S subunit body where it stabilizes the conformation of the head with respect to the body. The chain is Small ribosomal subunit protein uS5 from Karelsulcia muelleri (strain GWSS) (Sulcia muelleri).